Consider the following 57-residue polypeptide: Small hydrophobic protein (57 aa).

Residues 1-8 are Virion surface-facing; it reads MPAIQPPL. The helical transmembrane segment at 9–29 threads the bilayer; that stretch reads YPTFLLLILLSLIITLYVWII. The Intravirion segment spans residues 30–57; it reads STITYKTAVRHAALHQRSFSRWSLDHSL.

The protein belongs to the rubulavirus small hydrophobic protein family. As to quaternary structure, interacts with host TNFRSF1A, RIPK1 and IRAK1; these interactions interfere with host NF-kappa-B activation at the level of receptor complexes. Interacts with host protein UBQLN4.

Its subcellular location is the virion membrane. It is found in the host cell membrane. Its function is as follows. Plays a role in the inhibition of the host NF-kappa-B pathway. This inhibition occurs at the receptor level, by preventing the signaling of TNFR1 as well as IL-1R and TLR3. The sequence is that of Small hydrophobic protein (SH) from Mumps virus genotype B (strain Miyahara vaccine) (MuV).